Reading from the N-terminus, the 493-residue chain is 1-aminocyclopropane-1-carboxylate synthase 1 (493 aa).

Lysine 279 carries the N6-(pyridoxal phosphate)lysine modification.

The protein belongs to the class-I pyridoxal-phosphate-dependent aminotransferase family. Homodimer. Pyridoxal 5'-phosphate is required as a cofactor.

It catalyses the reaction S-adenosyl-L-methionine = 1-aminocyclopropane-1-carboxylate + S-methyl-5'-thioadenosine + H(+). It participates in alkene biosynthesis; ethylene biosynthesis via S-adenosyl-L-methionine; ethylene from S-adenosyl-L-methionine: step 1/2. In terms of biological role, catalyzes the formation of 1-aminocyclopropane-1-carboxylate, a direct precursor of ethylene in higher plants. The chain is 1-aminocyclopropane-1-carboxylate synthase 1 (ACC1A) from Cucurbita pepo (Vegetable marrow).